A 397-amino-acid polypeptide reads, in one-letter code: HTH-type transcriptional regulator GalR (397 aa).

2 HTH lysR-type domains span residues 7–64 and 99–156; these read PNLM…MRLT and FQAR…LQPT. 2 consecutive DNA-binding regions (H-T-H motif) follow at residues 24 to 43 and 116 to 135; these read VSRATEVLFRAQSVVTRAIA and MQTVARHFGLSQPAVSAALK.

It belongs to the LysR transcriptional regulatory family.

Functionally, transcriptional regulator for the galBCD and galTAP operons, encoding genes of the gallate degradation pathway. The protein is HTH-type transcriptional regulator GalR (galR) of Pseudomonas putida (strain ATCC 47054 / DSM 6125 / CFBP 8728 / NCIMB 11950 / KT2440).